Consider the following 344-residue polypeptide: Dihydroorotase (344 aa).

Residues histidine 13 and histidine 15 each coordinate Zn(2+). Substrate is bound by residues 15-17 (HFR) and asparagine 41. Zn(2+) contacts are provided by lysine 98, histidine 135, and histidine 173. At lysine 98 the chain carries N6-carboxylysine. Histidine 135 contacts substrate. Residue leucine 218 participates in substrate binding. Zn(2+) is bound at residue aspartate 246. Aspartate 246 is an active-site residue. Positions 250 and 262 each coordinate substrate.

The protein belongs to the metallo-dependent hydrolases superfamily. DHOase family. Class II DHOase subfamily. In terms of assembly, homodimer. Zn(2+) is required as a cofactor.

It catalyses the reaction (S)-dihydroorotate + H2O = N-carbamoyl-L-aspartate + H(+). Its pathway is pyrimidine metabolism; UMP biosynthesis via de novo pathway; (S)-dihydroorotate from bicarbonate: step 3/3. Functionally, catalyzes the reversible cyclization of carbamoyl aspartate to dihydroorotate. The sequence is that of Dihydroorotase from Shewanella sediminis (strain HAW-EB3).